The primary structure comprises 376 residues: Phosphoserine aminotransferase (376 aa).

Position 46 (R46) interacts with L-glutamate. Pyridoxal 5'-phosphate-binding positions include 80 to 81, F104, T150, D172, and Q195; that span reads AT. K196 is subject to N6-(pyridoxal phosphate)lysine. Residue 247-248 participates in pyridoxal 5'-phosphate binding; that stretch reads NT.

It belongs to the class-V pyridoxal-phosphate-dependent aminotransferase family. SerC subfamily. Homodimer. Requires pyridoxal 5'-phosphate as cofactor.

It is found in the cytoplasm. It catalyses the reaction O-phospho-L-serine + 2-oxoglutarate = 3-phosphooxypyruvate + L-glutamate. The enzyme catalyses 4-(phosphooxy)-L-threonine + 2-oxoglutarate = (R)-3-hydroxy-2-oxo-4-phosphooxybutanoate + L-glutamate. The protein operates within amino-acid biosynthesis; L-serine biosynthesis; L-serine from 3-phospho-D-glycerate: step 2/3. It functions in the pathway cofactor biosynthesis; pyridoxine 5'-phosphate biosynthesis; pyridoxine 5'-phosphate from D-erythrose 4-phosphate: step 3/5. Its function is as follows. Catalyzes the reversible conversion of 3-phosphohydroxypyruvate to phosphoserine and of 3-hydroxy-2-oxo-4-phosphonooxybutanoate to phosphohydroxythreonine. The polypeptide is Phosphoserine aminotransferase (Corynebacterium glutamicum (strain R)).